Consider the following 251-residue polypeptide: Proteasome subunit alpha type-7 (251 aa).

The protein belongs to the peptidase T1A family. In terms of assembly, the 26S proteasome consists of a 20S proteasome core and two 19S regulatory subunits. The 20S proteasome core is composed of 28 subunits that are arranged in four stacked rings, resulting in a barrel-shaped structure. The two end rings are each formed by seven alpha subunits, and the two central rings are each formed by seven beta subunits. The catalytic chamber with the active sites is on the inside of the barrel.

It localises to the cytoplasm. The protein resides in the nucleus. Its function is as follows. The proteasome is a multicatalytic proteinase complex which is characterized by its ability to cleave peptides with Arg, Phe, Tyr, Leu, and Glu adjacent to the leaving group at neutral or slightly basic pH. The proteasome has an ATP-dependent proteolytic activity. This Carassius auratus (Goldfish) protein is Proteasome subunit alpha type-7 (psma7).